Here is a 188-residue protein sequence, read N- to C-terminus: UPF0488 protein C8orf33 homolog (188 aa).

Disordered regions lie at residues 1–65, 87–112, and 144–182; these read MAAP…AEAQ, QRPTPKQKEQALGAIRTLRSQRTPLP, and AHSAQVQPVGEAARKKSRRVCRPRPEGRSKGTSDTRDEE. Alanine 2 is modified (N-acetylalanine). Serine 41 is subject to Phosphoserine. Residues 166–182 are compositionally biased toward basic and acidic residues; the sequence is PRPEGRSKGTSDTRDEE.

It belongs to the UPF0488 family.

This is UPF0488 protein C8orf33 homolog from Bos taurus (Bovine).